Reading from the N-terminus, the 349-residue chain is tRNA pseudouridine synthase D (349 aa).

Residue F27 participates in substrate binding. Residue D80 is the Nucleophile of the active site. N129 is a binding site for substrate. The 149-residue stretch at 155–303 (GVPNYFGAQR…VEAARRAMLL (149 aa)) folds into the TRUD domain. F329 is a substrate binding site.

Belongs to the pseudouridine synthase TruD family.

It carries out the reaction uridine(13) in tRNA = pseudouridine(13) in tRNA. Its function is as follows. Responsible for synthesis of pseudouridine from uracil-13 in transfer RNAs. In Shigella flexneri, this protein is tRNA pseudouridine synthase D.